Here is a 100-residue protein sequence, read N- to C-terminus: Chorion class A protein M2774 (100 aa).

A left arm region spans residues 1 to 33; sequence GGGWNGWNGLGGGWNGLGVGWSRLDGGYGGGCG. The central domain stretch occupies residues 34–81; the sequence is SYGGEGIGNVGVADELPVGGVTAVGGRVPIIGGVEYGGPARAAGAVSI. The interval 82–100 is right arm; the sequence is CGHCAPTCGCGRAGLGGYY.

Belongs to the chorion protein family.

Its function is as follows. This protein is one of many from the eggshell of the silk moth. The protein is Chorion class A protein M2774 of Bombyx mori (Silk moth).